The primary structure comprises 90 residues: Mitochondrial import inner membrane translocase subunit Tim10 (90 aa).

Positions 29–54 (CHRKCVPPHYKEAELSKGESVCLDRC) match the Twin CX3C motif motif. 2 cysteine pairs are disulfide-bonded: Cys-29/Cys-54 and Cys-33/Cys-50.

The protein belongs to the small Tim family. Heterohexamer; composed of 3 copies of TIMM9 and 3 copies of TIMM10/TIM10A, named soluble 70 kDa complex. The complex forms a 6-bladed alpha-propeller structure and associates with the TIMM22 component of the TIM22 complex. Interacts with multi-pass transmembrane proteins in transit. Also forms a complex composed of TIMM9, TIMM10/TIM10A and FXC1/TIM10B.

The protein localises to the mitochondrion inner membrane. Functionally, mitochondrial intermembrane chaperone that participates in the import and insertion of multi-pass transmembrane proteins into the mitochondrial inner membrane. May also be required for the transfer of beta-barrel precursors from the TOM complex to the sorting and assembly machinery (SAM complex) of the outer membrane. Acts as a chaperone-like protein that protects the hydrophobic precursors from aggregation and guide them through the mitochondrial intermembrane space. This Bos taurus (Bovine) protein is Mitochondrial import inner membrane translocase subunit Tim10 (TIMM10).